Here is a 347-residue protein sequence, read N- to C-terminus: Ribosomal RNA large subunit methyltransferase M (347 aa).

S-adenosyl-L-methionine is bound by residues Ser184, 217–220, Asp236, Asp256, and Asp272; that span reads APGG. The active-site Proton acceptor is the Lys301.

Belongs to the class I-like SAM-binding methyltransferase superfamily. RNA methyltransferase RlmE family. RlmM subfamily. As to quaternary structure, monomer.

The protein resides in the cytoplasm. The catalysed reaction is cytidine(2498) in 23S rRNA + S-adenosyl-L-methionine = 2'-O-methylcytidine(2498) in 23S rRNA + S-adenosyl-L-homocysteine + H(+). Functionally, catalyzes the 2'-O-methylation at nucleotide C2498 in 23S rRNA. This is Ribosomal RNA large subunit methyltransferase M from Xanthomonas oryzae pv. oryzae (strain PXO99A).